The following is a 295-amino-acid chain: sn-glycerol-3-phosphate transport system permease protein UgpA (295 aa).

At 1 to 11 (MSSSRPVFRSR) the chain is on the cytoplasmic side. The chain crosses the membrane as a helical span at residues 12 to 32 (WLPYLLVAPQLIITVIFFIWP). At 33-80 (AGEALWYSLQSVDPFGFSSQFVGLDNFVTLFHDSYYLDSFWTTIKFST) the chain is on the periplasmic side. The ABC transmembrane type-1 domain occupies 76-284 (IKFSTFVTVS…FLVIVLTVVQ (209 aa)). The chain crosses the membrane as a helical span at residues 81-101 (FVTVSGLLVSLFFAALVEYIV). Topologically, residues 102 to 109 (RGSRFYQT) are cytoplasmic. The helical transmembrane segment at 110–130 (LMLLPYAVAPAVAAVLWIFLF) threads the bilayer. Over 131–156 (NPGRGLITHFLAEFGYDWNHAQNSGQ) the chain is Periplasmic. The helical transmembrane segment at 157–177 (AMFLVVFASVWKQISYNFLFF) threads the bilayer. The Cytoplasmic portion of the chain corresponds to 178 to 207 (YAALQSIPRSLIEAAAIDGAGPIRRFFKIA). A helical transmembrane segment spans residues 208–228 (LPLIAPVSFFLLVVNLVYAFF). The Periplasmic segment spans residues 229-262 (DTFPVIDAATSGGPVQATTTLIYKIYREGFTGLD). Residues 263 to 283 (LASSAAQSMVLMFLVIVLTVV) form a helical membrane-spanning segment. Topologically, residues 284–295 (QFRYVESKVRYQ) are cytoplasmic.

It belongs to the binding-protein-dependent transport system permease family. UgpAE subfamily. In terms of assembly, the complex is composed of two ATP-binding proteins (UgpC), two transmembrane proteins (UgpA and UgpE) and a solute-binding protein (UgpB).

It is found in the cell inner membrane. Functionally, part of the ABC transporter complex UgpBAEC involved in sn-glycerol-3-phosphate (G3P) import. Probably responsible for the translocation of the substrate across the membrane. This chain is sn-glycerol-3-phosphate transport system permease protein UgpA (ugpA), found in Shigella flexneri.